Consider the following 689-residue polypeptide: Glycine--tRNA ligase beta subunit (689 aa).

The protein belongs to the class-II aminoacyl-tRNA synthetase family. In terms of assembly, tetramer of two alpha and two beta subunits.

The protein resides in the cytoplasm. It carries out the reaction tRNA(Gly) + glycine + ATP = glycyl-tRNA(Gly) + AMP + diphosphate. The protein is Glycine--tRNA ligase beta subunit of Salmonella arizonae (strain ATCC BAA-731 / CDC346-86 / RSK2980).